The sequence spans 83 residues: uncharacterized protein (83 aa).

A helical transmembrane segment spans residues 50–70 (IMVFLGEAWIILIPFAIFCII).

This sequence belongs to the plectrovirus ORF7 family.

It localises to the host membrane. This is an uncharacterized protein from Spiroplasma melliferum (SpV1).